Reading from the N-terminus, the 89-residue chain is UPF0297 protein MGAS9429_Spy1808 (89 aa).

It belongs to the UPF0297 family.

The protein is UPF0297 protein MGAS9429_Spy1808 of Streptococcus pyogenes serotype M12 (strain MGAS9429).